The sequence spans 59 residues: Large ribosomal subunit protein uL30 (59 aa).

It belongs to the universal ribosomal protein uL30 family. Part of the 50S ribosomal subunit.

This chain is Large ribosomal subunit protein uL30, found in Sodalis glossinidius (strain morsitans).